Here is a 1364-residue protein sequence, read N- to C-terminus: Serine protease SepA autotransporter (1364 aa).

Positions Met1 to Ser56 are cleaved as a signal peptide. One can recognise a Peptidase S6 domain in the interval Ala57 to Gln307. Catalysis depends on charge relay system residues His134, Asp162, and Ser267. Positions Asp1098–Phe1364 constitute an Autotransporter domain.

Cleaved to release the mature protein from the outer membrane. Cleavage is performed by an unknown protease.

The protein resides in the periplasm. It is found in the secreted. Its subcellular location is the cell surface. The protein localises to the cell outer membrane. With respect to regulation, inhibited by the serine protease inhibitor PMSF, but not by benzamidine, alpha 1-antitrypsin, alpha 1-antichymotrypsin. Not inhibited by metalloprotease inhibitors such as EDTA and orthophenanthroline. Major protein secreted in laboratory media showing proteolytic activity. May be involved in invasion and destruction of host intestinal epithelium. The sequence is that of Serine protease SepA autotransporter (sepA) from Shigella flexneri.